Reading from the N-terminus, the 164-residue chain is Phosphopantetheine adenylyltransferase (164 aa).

A substrate-binding site is contributed by Ser9. ATP-binding positions include 9 to 10 and His17; that span reads SF. Positions 41, 73, and 87 each coordinate substrate. ATP-binding positions include 88 to 90, Glu98, and 123 to 129; these read GLR and HSFLSSS.

Belongs to the bacterial CoaD family. As to quaternary structure, homohexamer. Requires Mg(2+) as cofactor.

The protein resides in the cytoplasm. The catalysed reaction is (R)-4'-phosphopantetheine + ATP + H(+) = 3'-dephospho-CoA + diphosphate. It participates in cofactor biosynthesis; coenzyme A biosynthesis; CoA from (R)-pantothenate: step 4/5. Its function is as follows. Reversibly transfers an adenylyl group from ATP to 4'-phosphopantetheine, yielding dephospho-CoA (dPCoA) and pyrophosphate. This chain is Phosphopantetheine adenylyltransferase, found in Rubrobacter xylanophilus (strain DSM 9941 / JCM 11954 / NBRC 16129 / PRD-1).